We begin with the raw amino-acid sequence, 272 residues long: Imidazole glycerol phosphate synthase subunit HisF (272 aa).

Active-site residues include Asp11 and Asp130.

It belongs to the HisA/HisF family. As to quaternary structure, heterodimer of HisH and HisF.

It localises to the cytoplasm. The catalysed reaction is 5-[(5-phospho-1-deoxy-D-ribulos-1-ylimino)methylamino]-1-(5-phospho-beta-D-ribosyl)imidazole-4-carboxamide + L-glutamine = D-erythro-1-(imidazol-4-yl)glycerol 3-phosphate + 5-amino-1-(5-phospho-beta-D-ribosyl)imidazole-4-carboxamide + L-glutamate + H(+). The protein operates within amino-acid biosynthesis; L-histidine biosynthesis; L-histidine from 5-phospho-alpha-D-ribose 1-diphosphate: step 5/9. Functionally, IGPS catalyzes the conversion of PRFAR and glutamine to IGP, AICAR and glutamate. The HisF subunit catalyzes the cyclization activity that produces IGP and AICAR from PRFAR using the ammonia provided by the HisH subunit. In Methanococcus maripaludis (strain DSM 14266 / JCM 13030 / NBRC 101832 / S2 / LL), this protein is Imidazole glycerol phosphate synthase subunit HisF.